The sequence spans 173 residues: Large ribosomal subunit protein uL10 (173 aa).

The protein belongs to the universal ribosomal protein uL10 family. Part of the ribosomal stalk of the 50S ribosomal subunit. The N-terminus interacts with L11 and the large rRNA to form the base of the stalk. The C-terminus forms an elongated spine to which L12 dimers bind in a sequential fashion forming a multimeric L10(L12)X complex.

In terms of biological role, forms part of the ribosomal stalk, playing a central role in the interaction of the ribosome with GTP-bound translation factors. The chain is Large ribosomal subunit protein uL10 from Oleidesulfovibrio alaskensis (strain ATCC BAA-1058 / DSM 17464 / G20) (Desulfovibrio alaskensis).